Reading from the N-terminus, the 134-residue chain is Large ribosomal subunit protein eL32 (134 aa).

It belongs to the eukaryotic ribosomal protein eL32 family.

The chain is Large ribosomal subunit protein eL32 (RpL32) from Drosophila bifasciata (Fruit fly).